The primary structure comprises 258 residues: Undecaprenyl-diphosphatase (258 aa).

8 consecutive transmembrane segments (helical) span residues 1–21 (MDFL…FLPV), 42–62 (LKCF…FMFF), 69–89 (FNLW…GFLA), 96–116 (FFEP…FIVV), 135–155 (VSFK…IPGT), 173–193 (EVAA…ATAY), 211–231 (IFLV…KLFL), and 237–257 (FSYI…LIYI).

It belongs to the UppP family.

Its subcellular location is the cell inner membrane. It carries out the reaction di-trans,octa-cis-undecaprenyl diphosphate + H2O = di-trans,octa-cis-undecaprenyl phosphate + phosphate + H(+). Catalyzes the dephosphorylation of undecaprenyl diphosphate (UPP). Confers resistance to bacitracin. In Campylobacter fetus subsp. fetus (strain 82-40), this protein is Undecaprenyl-diphosphatase.